The sequence spans 282 residues: 4-hydroxy-3-methylbut-2-enyl diphosphate reductase (282 aa).

C14 lines the [4Fe-4S] cluster pocket. 2 residues coordinate (2E)-4-hydroxy-3-methylbut-2-enyl diphosphate: H43 and H78. Dimethylallyl diphosphate-binding residues include H43 and H78. 2 residues coordinate isopentenyl diphosphate: H43 and H78. C100 provides a ligand contact to [4Fe-4S] cluster. Position 128 (H128) interacts with (2E)-4-hydroxy-3-methylbut-2-enyl diphosphate. H128 contacts dimethylallyl diphosphate. H128 contributes to the isopentenyl diphosphate binding site. The active-site Proton donor is E130. Position 164 (T164) interacts with (2E)-4-hydroxy-3-methylbut-2-enyl diphosphate. C192 contributes to the [4Fe-4S] cluster binding site. (2E)-4-hydroxy-3-methylbut-2-enyl diphosphate-binding residues include S220, S221, N222, and S266. Residues S220, S221, N222, and S266 each coordinate dimethylallyl diphosphate. 4 residues coordinate isopentenyl diphosphate: S220, S221, N222, and S266.

The protein belongs to the IspH family. The cofactor is [4Fe-4S] cluster.

The enzyme catalyses isopentenyl diphosphate + 2 oxidized [2Fe-2S]-[ferredoxin] + H2O = (2E)-4-hydroxy-3-methylbut-2-enyl diphosphate + 2 reduced [2Fe-2S]-[ferredoxin] + 2 H(+). It catalyses the reaction dimethylallyl diphosphate + 2 oxidized [2Fe-2S]-[ferredoxin] + H2O = (2E)-4-hydroxy-3-methylbut-2-enyl diphosphate + 2 reduced [2Fe-2S]-[ferredoxin] + 2 H(+). The protein operates within isoprenoid biosynthesis; dimethylallyl diphosphate biosynthesis; dimethylallyl diphosphate from (2E)-4-hydroxy-3-methylbutenyl diphosphate: step 1/1. It functions in the pathway isoprenoid biosynthesis; isopentenyl diphosphate biosynthesis via DXP pathway; isopentenyl diphosphate from 1-deoxy-D-xylulose 5-phosphate: step 6/6. Catalyzes the conversion of 1-hydroxy-2-methyl-2-(E)-butenyl 4-diphosphate (HMBPP) into a mixture of isopentenyl diphosphate (IPP) and dimethylallyl diphosphate (DMAPP). Acts in the terminal step of the DOXP/MEP pathway for isoprenoid precursor biosynthesis. This Clostridium perfringens (strain ATCC 13124 / DSM 756 / JCM 1290 / NCIMB 6125 / NCTC 8237 / Type A) protein is 4-hydroxy-3-methylbut-2-enyl diphosphate reductase.